The sequence spans 432 residues: Glutamyl-tRNA reductase (432 aa).

Substrate contacts are provided by residues 49–52 (TCNR), S101, 106–108 (ESQ), and Q112. Catalysis depends on C50, which acts as the Nucleophile. 181 to 186 (GAGETI) contacts NADP(+). A disordered region spans residues 410–432 (KPGYHHPTLQTTIVKTDETDPAS).

It belongs to the glutamyl-tRNA reductase family. Homodimer.

It carries out the reaction (S)-4-amino-5-oxopentanoate + tRNA(Glu) + NADP(+) = L-glutamyl-tRNA(Glu) + NADPH + H(+). It participates in porphyrin-containing compound metabolism; protoporphyrin-IX biosynthesis; 5-aminolevulinate from L-glutamyl-tRNA(Glu): step 1/2. Its function is as follows. Catalyzes the NADPH-dependent reduction of glutamyl-tRNA(Glu) to glutamate 1-semialdehyde (GSA). This chain is Glutamyl-tRNA reductase, found in Xylella fastidiosa (strain M23).